Here is a 586-residue protein sequence, read N- to C-terminus: Mitochondrial tRNA methylthiotransferase CDK5RAP1 (586 aa).

A mitochondrion-targeting transit peptide spans 1 to 30 (MHPLQRVFRAQRLSAPLTSMCWVLLRTFRA). The tract at residues 68–90 (ASVPQEKPSSPEVEDPPPYLSGD) is disordered. One can recognise an MTTase N-terminal domain in the interval 97–217 (RKVYLETYGC…LPRLLAVVES (121 aa)). Residues C106, C142, C180, C255, C259, and C262 each contribute to the [4Fe-4S] cluster site. The 255-residue stretch at 241-495 (SPSATSAFVS…ITVFREEASK (255 aa)) folds into the Radical SAM core domain. The TRAM domain maps to 498-573 (ATSVGCTQLV…SQTLKGHILC (76 aa)).

It belongs to the methylthiotransferase family. MiaB subfamily. Interacts with CDK5R1 (p35 form). CDK5RAP1, CDK5RAP2 and CDK5RAP3 show competitive binding to CDK5R1. Forms a complex with CDK5R1 and CDK5. [4Fe-4S] cluster is required as a cofactor. Expressed in brain.

It localises to the mitochondrion inner membrane. The enzyme catalyses N(6)-dimethylallyladenosine(37) in tRNA + (sulfur carrier)-SH + AH2 + 2 S-adenosyl-L-methionine = 2-methylsulfanyl-N(6)-dimethylallyladenosine(37) in tRNA + (sulfur carrier)-H + 5'-deoxyadenosine + L-methionine + A + S-adenosyl-L-homocysteine + 2 H(+). Its function is as follows. Methylthiotransferase that catalyzes the conversion of N6-(dimethylallyl)adenosine (i(6)A) to 2-methylthio-N6-(dimethylallyl)adenosine (ms(2)i(6)A) at position 37 (adjacent to the 3'-end of the anticodon) of four mitochondrial DNA-encoded tRNAs (Ser(UCN), Phe, Tyr and Trp). Essential for efficient and highly accurate protein translation by the ribosome. Specifically inhibits CDK5 activation by CDK5R1. Essential for efficient mitochondrial protein synthesis and respiratory chain. The protein is Mitochondrial tRNA methylthiotransferase CDK5RAP1 (Cdk5rap1) of Rattus norvegicus (Rat).